The sequence spans 454 residues: tRNA modification GTPase MnmE (454 aa).

Residues Arg23, Glu80, and Lys120 each contribute to the (6S)-5-formyl-5,6,7,8-tetrahydrofolate site. Residues 216-377 enclose the TrmE-type G domain; that stretch reads GMKVVIAGRP…LRDHLKQSMG (162 aa). Asn226 contacts K(+). Residues 226–231, 245–251, 270–273, 335–338, and 358–360 each bind GTP; these read NAGKSS, TDIAGTT, DTAG, NKAD, and SAR. Ser230 contributes to the Mg(2+) binding site. Residues Thr245, Ile247, and Thr250 each coordinate K(+). Thr251 is a Mg(2+) binding site. Lys454 is a binding site for (6S)-5-formyl-5,6,7,8-tetrahydrofolate.

It belongs to the TRAFAC class TrmE-Era-EngA-EngB-Septin-like GTPase superfamily. TrmE GTPase family. As to quaternary structure, homodimer. Heterotetramer of two MnmE and two MnmG subunits. It depends on K(+) as a cofactor.

Its subcellular location is the cytoplasm. Its function is as follows. Exhibits a very high intrinsic GTPase hydrolysis rate. Involved in the addition of a carboxymethylaminomethyl (cmnm) group at the wobble position (U34) of certain tRNAs, forming tRNA-cmnm(5)s(2)U34. This chain is tRNA modification GTPase MnmE, found in Serratia proteamaculans (strain 568).